Consider the following 449-residue polypeptide: Glucose-6-phosphate isomerase (449 aa).

E291 serves as the catalytic Proton donor. Active-site residues include H312 and K426.

Belongs to the GPI family.

Its subcellular location is the cytoplasm. It carries out the reaction alpha-D-glucose 6-phosphate = beta-D-fructose 6-phosphate. The protein operates within carbohydrate biosynthesis; gluconeogenesis. It functions in the pathway carbohydrate degradation; glycolysis; D-glyceraldehyde 3-phosphate and glycerone phosphate from D-glucose: step 2/4. Functionally, catalyzes the reversible isomerization of glucose-6-phosphate to fructose-6-phosphate. This chain is Glucose-6-phosphate isomerase, found in Streptococcus pyogenes serotype M6 (strain ATCC BAA-946 / MGAS10394).